We begin with the raw amino-acid sequence, 591 residues long: Aspartate--tRNA(Asp/Asn) ligase (591 aa).

Position 176 (Glu-176) interacts with L-aspartate. An aspartate region spans residues 200–203; that stretch reads QLFK. An L-aspartate-binding site is contributed by Arg-222. Residues 222 to 224 and Gln-231 contribute to the ATP site; that span reads RDE. Residue His-450 participates in L-aspartate binding. Glu-484 is an ATP binding site. Arg-491 is an L-aspartate binding site. 536-539 provides a ligand contact to ATP; the sequence is GLDR.

The protein belongs to the class-II aminoacyl-tRNA synthetase family. Type 1 subfamily. As to quaternary structure, homodimer.

It is found in the cytoplasm. It carries out the reaction tRNA(Asx) + L-aspartate + ATP = L-aspartyl-tRNA(Asx) + AMP + diphosphate. Its function is as follows. Aspartyl-tRNA synthetase with relaxed tRNA specificity since it is able to aspartylate not only its cognate tRNA(Asp) but also tRNA(Asn). Reaction proceeds in two steps: L-aspartate is first activated by ATP to form Asp-AMP and then transferred to the acceptor end of tRNA(Asp/Asn). This Bacillus thuringiensis (strain Al Hakam) protein is Aspartate--tRNA(Asp/Asn) ligase.